Consider the following 489-residue polypeptide: MKTVILLTFLWGLSCALPVARYQNTESESSEERTGNLAQSPPPPMANSDHTDSSESGEELGSDRSQYRPAGGLSKSAGMDADKEEDEDDSGDDTFGDEDNGPGPEERQWGGPSRLDSDEDSADTTQSSEDSTSQENSAQDTPSDSKDHHSDEADSRPEAGDSTQDSESEEYRVGGGSEGESSHGDGSEFDDEGMQSDDPGSTRSDRGHTRMSSAGIRSEESKGDHEPTSTQDSDDSQDVEFSSRKSFRRSRVSEEDDRGELADSNSRETQSVSTEDFRSKEESRSETQEDTAETQSQEDSPEGQDPSSESSEEAGEPSQESSSESQEGVASESRGDNPDNTSQTGDQRDSESSEEDRLNTFSSSESQSTEEQGDSESNESLSLSEESQESAQDEDSSSQEGLQSQSASRESRSQESQSEQDSRSEENRDSDSQDSSRSKEESNSTGSTSSSEEDNHPKNIEADNRKLIVDAYHNKPIGDQDDNDCQDGY.

An N-terminal signal peptide occupies residues Met-1–Ala-16. The tract at residues Tyr-22–Tyr-489 is disordered. The span at Asp-82–Asn-100 shows a compositional bias: acidic residues. A compositionally biased stretch (low complexity) spans Asp-123 to Ala-138. 2 stretches are compositionally biased toward basic and acidic residues: residues Ser-143 to Ala-159 and Arg-217 to Pro-227. The span at Asp-263–Thr-274 shows a compositional bias: polar residues. A compositionally biased stretch (basic and acidic residues) spans Glu-275 to Thr-287. The span at Glu-316–Glu-332 shows a compositional bias: low complexity. Residues Arg-334–Asp-336 carry the Cell attachment site motif. Asn-340 carries an N-linked (GlcNAc...) asparagine glycan. Basic and acidic residues predominate over residues Asp-346 to Leu-358. An N-linked (GlcNAc...) asparagine glycan is attached at Asn-378. A compositionally biased stretch (acidic residues) spans Glu-386–Ser-397. Residues Ser-398–Glu-419 are compositionally biased toward low complexity. Positions Gln-420–Ser-442 are enriched in basic and acidic residues. N-linked (GlcNAc...) asparagine glycosylation occurs at Asn-443. Over residues Glu-453–Gly-478 the composition is skewed to basic and acidic residues. A compositionally biased stretch (acidic residues) spans Asp-479 to Tyr-489.

As to quaternary structure, interacts with importin alpha. In terms of processing, phosphorylated in the cytosol and extracellular matrix and unphosphorylated in the nucleus. Phosphorylation is necessary for nucleocytoplasmic transport and may be catalyzed by a nuclear isoform of CK2 and can be augmented by calcium. Phosphorylated (in vitro) by FAM20C in the extracellular medium at sites within the S-x-E/pS motif. Expressed in tooth particularly in odontoblast and ameloblast.

Its subcellular location is the nucleus. It is found in the cytoplasm. The protein resides in the secreted. It localises to the extracellular space. The protein localises to the extracellular matrix. May have a dual function during osteoblast differentiation. In the nucleus of undifferentiated osteoblasts, unphosphorylated form acts as a transcriptional component for activation of osteoblast-specific genes like osteocalcin. During the osteoblast to osteocyte transition phase it is phosphorylated and exported into the extracellular matrix, where it regulates nucleation of hydroxyapatite. This is Dentin matrix acidic phosphoprotein 1 (Dmp1) from Rattus norvegicus (Rat).